Consider the following 256-residue polypeptide: Glucosamine-6-phosphate deaminase (256 aa).

The Proton acceptor; for enolization step role is filled by Asp-68. The active-site For ring-opening step is Asn-137. Catalysis depends on His-139, which acts as the Proton acceptor; for ring-opening step. Catalysis depends on Glu-144, which acts as the For ring-opening step.

It belongs to the glucosamine/galactosamine-6-phosphate isomerase family. NagB subfamily.

The enzyme catalyses alpha-D-glucosamine 6-phosphate + H2O = beta-D-fructose 6-phosphate + NH4(+). It functions in the pathway amino-sugar metabolism; N-acetylneuraminate degradation; D-fructose 6-phosphate from N-acetylneuraminate: step 5/5. In terms of biological role, catalyzes the reversible isomerization-deamination of glucosamine 6-phosphate (GlcN6P) to form fructose 6-phosphate (Fru6P) and ammonium ion. The protein is Glucosamine-6-phosphate deaminase of Mycoplasmopsis pulmonis (strain UAB CTIP) (Mycoplasma pulmonis).